A 409-amino-acid chain; its full sequence is Bone morphogenetic protein 4 (409 aa).

Positions 1 to 24 (MIPGNRMLMVVLLCQVLLGGASHA) are cleaved as a signal peptide. Positions 25 to 293 (SLIPETGKKK…ALTRRRRAKR (269 aa)) are excised as a propeptide. Ser91 carries the post-translational modification Phosphoserine. Residues Asn144 and Asn209 are each glycosylated (N-linked (GlcNAc...) asparagine). The tract at residues 284–308 (ALTRRRRAKRSPKHHPQRARKKNKN) is disordered. Cystine bridges form between Cys309–Cys374, Cys338–Cys406, and Cys342–Cys408. Asn351 and Asn366 each carry an N-linked (GlcNAc...) asparagine glycan.

The protein belongs to the TGF-beta family. Homodimer; disulfide-linked. Interacts with GREM2. Part of a complex consisting of TWSG1 and CHRD. Interacts with the serine proteases, HTRA1 and HTRA3; the interaction with either inhibits BMP4-mediated signaling. The HTRA protease activity is required for this inhibition. Interacts with SOSTDC1. Interacts with FBN1 (via N-terminal domain) and FBN2. Interacts with type I receptor BMPR1A. Interacts with type II receptor BMPR2. Interacts with FSTL1; this interaction inhibits the activation of the BMP4/Smad1/5/8 signaling pathway. Interacts with SCUBE3. Interacts with TGFBR3.

It localises to the secreted. The protein localises to the extracellular space. It is found in the extracellular matrix. In terms of biological role, growth factor of the TGF-beta superfamily that plays essential roles in many developmental processes, including neurogenesis, vascular development, angiogenesis and osteogenesis. Acts in concert with PTHLH/PTHRP to stimulate ductal outgrowth during embryonic mammary development and to inhibit hair follicle induction. Initiates the canonical BMP signaling cascade by associating with type I receptor BMPR1A and type II receptor BMPR2. Once all three components are bound together in a complex at the cell surface, BMPR2 phosphorylates and activates BMPR1A. In turn, BMPR1A propagates signal by phosphorylating SMAD1/5/8 that travel to the nucleus and act as activators and repressors of transcription of target genes. Positively regulates the expression of odontogenic development regulator MSX1 via inducing the IPO7-mediated import of SMAD1 to the nucleus. Required for MSX1-mediated mesenchymal molar tooth bud development beyond the bud stage, via promoting Wnt signaling. Acts as a positive regulator of odontoblast differentiation during mesenchymal tooth germ formation, expression is repressed during the bell stage by MSX1-mediated inhibition of CTNNB1 signaling. Able to induce its own expression in dental mesenchymal cells and also in the neighboring dental epithelial cells via an MSX1-mediated pathway. Can also signal through non-canonical BMP pathways such as ERK/MAP kinase, PI3K/Akt, or SRC cascades. For example, induces SRC phosphorylation which, in turn, activates VEGFR2, leading to an angiogenic response. The protein is Bone morphogenetic protein 4 of Bos taurus (Bovine).